Consider the following 150-residue polypeptide: 3-dehydroquinate dehydratase (150 aa).

Residue Y26 is the Proton acceptor of the active site. Residues N77, H83, and D90 each contribute to the substrate site. Catalysis depends on H103, which acts as the Proton donor. Residues L104–S105 and R114 each bind substrate.

Belongs to the type-II 3-dehydroquinase family. In terms of assembly, homododecamer.

The catalysed reaction is 3-dehydroquinate = 3-dehydroshikimate + H2O. The protein operates within metabolic intermediate biosynthesis; chorismate biosynthesis; chorismate from D-erythrose 4-phosphate and phosphoenolpyruvate: step 3/7. Its function is as follows. Catalyzes a trans-dehydration via an enolate intermediate. The chain is 3-dehydroquinate dehydratase from Pectobacterium carotovorum subsp. carotovorum (strain PC1).